Reading from the N-terminus, the 563-residue chain is Alpha-keto-acid decarboxylase (563 aa).

Position 59 (glutamate 59) interacts with thiamine diphosphate. Positions 347 to 367 (SSPPVASPPAEPLPPPPPREQ) are disordered. Residues 351 to 366 (VASPPAEPLPPPPPRE) show a composition bias toward pro residues. The interval 394–476 (TSFYGMADHR…VVVNNDGYTV (83 aa)) is thiamine pyrophosphate binding. Residues aspartate 444, asparagine 471, and glycine 473 each coordinate Mg(2+).

The protein belongs to the TPP enzyme family. A metal cation serves as cofactor. The cofactor is thiamine diphosphate.

Its function is as follows. Decarboxylates branched-chain and aromatic alpha-keto acids to aldehydes. This Mycolicibacterium paratuberculosis (strain ATCC BAA-968 / K-10) (Mycobacterium paratuberculosis) protein is Alpha-keto-acid decarboxylase (kdc).